Here is a 487-residue protein sequence, read N- to C-terminus: Beta-barrel assembly-enhancing protease (487 aa).

The signal sequence occupies residues 1–27 (MFRQLKKNLVATLIAALALGQVAPAFA). Residue His136 participates in Zn(2+) binding. Glu137 is a catalytic residue. The Zn(2+) site is built by His140 and Glu201. Asp205 serves as the catalytic Proton donor. TPR repeat units follow at residues 309 to 342 (HAAQ…EPNN) and 427 to 460 (DQEL…AKLG).

This sequence belongs to the peptidase M48 family. BepA subfamily. The cofactor is Zn(2+).

It localises to the periplasm. Functions both as a chaperone and a metalloprotease. Maintains the integrity of the outer membrane by promoting either the assembly or the elimination of outer membrane proteins, depending on their folding state. The protein is Beta-barrel assembly-enhancing protease of Salmonella typhi.